Reading from the N-terminus, the 120-residue chain is Large ribosomal subunit protein bL20 (120 aa).

It belongs to the bacterial ribosomal protein bL20 family.

Functionally, binds directly to 23S ribosomal RNA and is necessary for the in vitro assembly process of the 50S ribosomal subunit. It is not involved in the protein synthesizing functions of that subunit. The polypeptide is Large ribosomal subunit protein bL20 (Ureaplasma urealyticum serovar 10 (strain ATCC 33699 / Western)).